Reading from the N-terminus, the 212-residue chain is Small ribosomal subunit protein uS3 (212 aa).

The KH type-2 domain occupies 39 to 108 (IKNYIKERYK…EITISVVEVR (70 aa)).

It belongs to the universal ribosomal protein uS3 family. As to quaternary structure, part of the 30S ribosomal subunit. Forms a tight complex with proteins S10 and S14.

Binds the lower part of the 30S subunit head. Binds mRNA in the 70S ribosome, positioning it for translation. The chain is Small ribosomal subunit protein uS3 from Aquifex aeolicus (strain VF5).